Here is a 220-residue protein sequence, read N- to C-terminus: Probable nicotinate-nucleotide adenylyltransferase (220 aa).

This sequence belongs to the NadD family.

The enzyme catalyses nicotinate beta-D-ribonucleotide + ATP + H(+) = deamido-NAD(+) + diphosphate. It participates in cofactor biosynthesis; NAD(+) biosynthesis; deamido-NAD(+) from nicotinate D-ribonucleotide: step 1/1. Catalyzes the reversible adenylation of nicotinate mononucleotide (NaMN) to nicotinic acid adenine dinucleotide (NaAD). This chain is Probable nicotinate-nucleotide adenylyltransferase, found in Yersinia enterocolitica serotype O:8 / biotype 1B (strain NCTC 13174 / 8081).